Here is a 1121-residue protein sequence, read N- to C-terminus: Cilia- and flagella-associated protein 70 (1121 aa).

Over residues 410–428 the composition is skewed to basic and acidic residues; it reads NLKEDKPVKEKDIDGRPRP. The segment at 410–457 is disordered; the sequence is NLKEDKPVKEKDIDGRPRPGDVQAPSIKSQSSDTPLEGEPPLSHNPEG. 3 TPR repeats span residues 635–668, 669–702, and 704–736; these read SEQL…EPQN, LDHW…NQSH, and HSLL…EPTN. Disordered regions lie at residues 778–802 and 836–858; these read KQKS…PWGI and QSDS…QKPS. TPR repeat units follow at residues 929–962, 963–996, 1000–1033, 1035–1066, and 1068–1100; these read CEYY…DYLN, PNVW…VVDA, HFIF…SPSC, TWLG…NNYN, and EVWA…KLKD.

This sequence belongs to the CFAP70 family. As to expression, expressed in testis.

The protein localises to the cell projection. Its subcellular location is the cilium. The protein resides in the flagellum. It is found in the cytoplasm. It localises to the cytoskeleton. The protein localises to the flagellum basal body. Its subcellular location is the cilium axoneme. In terms of biological role, axoneme-binding protein that plays a role in the regulation of ciliary motility and cilium length. The sequence is that of Cilia- and flagella-associated protein 70 from Homo sapiens (Human).